The sequence spans 213 residues: MKTEDLITMLAAGAGAVEAPSAAQRYALAIGWGAAGATLLMLALLQVRHDLGLALLLPMFWVKVGFVTCLAAGSLFAVLRLSRPGAKTNWVPAALGLPVLGMWAIAAFTLIEAEPMERSNLFFGDTWKSCPLLIAMLSVPVFAAVLRSMKDLAPTRPRLAGFAAGLLAGAVAAVVYCLHCPELGAPFIGFWYLLGMLIPAAVGVLLGNSMLRW.

6 consecutive transmembrane segments (helical) span residues 27-47, 51-71, 91-111, 126-146, 159-179, and 187-207; these read ALAI…LLQV, LGLA…TCLA, VPAA…FTLI, TWKS…AAVL, LAGF…YCLH, and FIGF…VLLG.

This sequence belongs to the NrsF anti-sigma-F factor family.

It is found in the cell inner membrane. Its function is as follows. Probably an anti-sigma factor for extracytoplasmic function (ECF) sigma factor sigma-F (SigF), which responds to (hypo)chlorite. ECF sigma factors are held in an inactive form by a cognate anti-sigma factor. The sequence is that of Probable anti-sigma-F factor NrsF from Azospira oryzae (strain ATCC BAA-33 / DSM 13638 / PS) (Dechlorosoma suillum).